We begin with the raw amino-acid sequence, 126 residues long: S-adenosylmethionine decarboxylase proenzyme (126 aa).

Catalysis depends on Ser63, which acts as the Schiff-base intermediate with substrate; via pyruvic acid. A Pyruvic acid (Ser); by autocatalysis modification is found at Ser63. His68 serves as the catalytic Proton acceptor; for processing activity. The Proton donor; for catalytic activity role is filled by Cys83.

It belongs to the prokaryotic AdoMetDC family. Type 1 subfamily. In terms of assembly, heterotetramer of two alpha and two beta chains arranged as a dimer of alpha/beta heterodimers. It depends on pyruvate as a cofactor. Post-translationally, is synthesized initially as an inactive proenzyme. Formation of the active enzyme involves a self-maturation process in which the active site pyruvoyl group is generated from an internal serine residue via an autocatalytic post-translational modification. Two non-identical subunits are generated from the proenzyme in this reaction, and the pyruvate is formed at the N-terminus of the alpha chain, which is derived from the carboxyl end of the proenzyme. The post-translation cleavage follows an unusual pathway, termed non-hydrolytic serinolysis, in which the side chain hydroxyl group of the serine supplies its oxygen atom to form the C-terminus of the beta chain, while the remainder of the serine residue undergoes an oxidative deamination to produce ammonia and the pyruvoyl group blocking the N-terminus of the alpha chain.

The enzyme catalyses S-adenosyl-L-methionine + H(+) = S-adenosyl 3-(methylsulfanyl)propylamine + CO2. The protein operates within amine and polyamine biosynthesis; S-adenosylmethioninamine biosynthesis; S-adenosylmethioninamine from S-adenosyl-L-methionine: step 1/1. Catalyzes the decarboxylation of S-adenosylmethionine to S-adenosylmethioninamine (dcAdoMet), the propylamine donor required for the synthesis of the polyamines spermine and spermidine from the diamine putrescine. This chain is S-adenosylmethionine decarboxylase proenzyme, found in Clostridium tetani (strain Massachusetts / E88).